Reading from the N-terminus, the 469-residue chain is Serine hydroxymethyltransferase, cytosolic (469 aa).

At lysine 248 the chain carries N6-(pyridoxal phosphate)lysine.

This sequence belongs to the SHMT family. Homotetramer. It depends on pyridoxal 5'-phosphate as a cofactor.

It localises to the cytoplasm. It catalyses the reaction (6R)-5,10-methylene-5,6,7,8-tetrahydrofolate + glycine + H2O = (6S)-5,6,7,8-tetrahydrofolate + L-serine. Its pathway is one-carbon metabolism; tetrahydrofolate interconversion. Its function is as follows. Interconversion of serine and glycine. The chain is Serine hydroxymethyltransferase, cytosolic (SHM2) from Candida glabrata (strain ATCC 2001 / BCRC 20586 / JCM 3761 / NBRC 0622 / NRRL Y-65 / CBS 138) (Yeast).